The sequence spans 173 residues: Ribulose bisphosphate carboxylase small subunit, chloroplastic 2 (173 aa).

Residues 1-33 (VVLSKECAKPLATPKVTLNKRGFATTIATKNRE) constitute a chloroplast transit peptide.

The protein belongs to the RuBisCO small chain family. In terms of assembly, heterohexadecamer of 8 large and 8 small subunits.

The protein localises to the plastid. It localises to the chloroplast. RuBisCO catalyzes two reactions: the carboxylation of D-ribulose 1,5-bisphosphate, the primary event in carbon dioxide fixation, as well as the oxidative fragmentation of the pentose substrate. Both reactions occur simultaneously and in competition at the same active site. Although the small subunit is not catalytic it is essential for maximal activity. This is Ribulose bisphosphate carboxylase small subunit, chloroplastic 2 from Acetabularia acetabulum (Mermaid's wine glass).